Reading from the N-terminus, the 273-residue chain is Putative pyruvate, phosphate dikinase regulatory protein (273 aa).

153–160 (GISRTSKT) is a binding site for ADP.

The protein belongs to the pyruvate, phosphate/water dikinase regulatory protein family. PDRP subfamily.

The enzyme catalyses N(tele)-phospho-L-histidyl/L-threonyl-[pyruvate, phosphate dikinase] + ADP = N(tele)-phospho-L-histidyl/O-phospho-L-threonyl-[pyruvate, phosphate dikinase] + AMP + H(+). It carries out the reaction N(tele)-phospho-L-histidyl/O-phospho-L-threonyl-[pyruvate, phosphate dikinase] + phosphate + H(+) = N(tele)-phospho-L-histidyl/L-threonyl-[pyruvate, phosphate dikinase] + diphosphate. Functionally, bifunctional serine/threonine kinase and phosphorylase involved in the regulation of the pyruvate, phosphate dikinase (PPDK) by catalyzing its phosphorylation/dephosphorylation. The chain is Putative pyruvate, phosphate dikinase regulatory protein from Agrobacterium fabrum (strain C58 / ATCC 33970) (Agrobacterium tumefaciens (strain C58)).